The chain runs to 118 residues: Diacylglycerol kinase (118 aa).

E28 serves as a coordination point for a divalent metal cation. 2 helical membrane passes run 29–49 (TAFRHECFLACILIPLTFFLG) and 55–75 (IILMISSVLLVMALELLNSAV). E69 (proton acceptor) is an active-site residue. A divalent metal cation is bound at residue E76. A helical membrane pass occupies residues 98 to 118 (SASVFIALCIVGIVWGGILFF).

This sequence belongs to the bacterial diacylglycerol kinase family. Mg(2+) serves as cofactor.

It localises to the cell inner membrane. It catalyses the reaction a 1,2-diacyl-sn-glycerol + ATP = a 1,2-diacyl-sn-glycero-3-phosphate + ADP + H(+). Its function is as follows. Catalyzes the ATP-dependent phosphorylation of sn-l,2-diacylglycerol (DAG) to phosphatidic acid. Involved in the recycling of diacylglycerol produced as a by-product during membrane-derived oligosaccharide (MDO) biosynthesis. This Haemophilus influenzae (strain ATCC 51907 / DSM 11121 / KW20 / Rd) protein is Diacylglycerol kinase (dgkA).